Here is a 71-residue protein sequence, read N- to C-terminus: Small ribosomal subunit protein bS21 (71 aa).

Over residues 50–59 (AAAVKRHAKK) the composition is skewed to basic residues. The segment at 50–71 (AAAVKRHAKKVQREQRRAVRLY) is disordered. A compositionally biased stretch (basic and acidic residues) spans 60–71 (VQREQRRAVRLY).

It belongs to the bacterial ribosomal protein bS21 family.

The sequence is that of Small ribosomal subunit protein bS21 from Pseudomonas fluorescens (strain ATCC BAA-477 / NRRL B-23932 / Pf-5).